A 348-amino-acid polypeptide reads, in one-letter code: Ion-translocating oxidoreductase complex subunit D (348 aa).

The next 4 membrane-spanning stretches (helical) occupy residues 23–43 (WVLACALPGLIAQTYFFGYGT), 44–64 (LIQLLLAISVAVALEAGIMLL), 72–91 (ALRDYSAVVTAWLLAVAIPP), and 126–146 (IAYVVLLISFPVQMTSWMAPI). T187 is modified (FMN phosphoryl threonine). A run of 5 helical transmembrane segments spans residues 214-234 (FAGIGWEWVNIAYLLGGLILL), 243-263 (IPMAMLAGLVFTALLAQLFAP), 266-286 (TASPMIHLLSGATMLGAFFIA), 300-320 (LIYGFFIGAMVFLIRSWGGFP), and 321-341 (DGVAFAVLLANMCVPLIDYYT).

The protein belongs to the NqrB/RnfD family. In terms of assembly, the complex is composed of six subunits: RnfA, RnfB, RnfC, RnfD, RnfE and RnfG. It depends on FMN as a cofactor.

It localises to the cell inner membrane. Functionally, part of a membrane-bound complex that couples electron transfer with translocation of ions across the membrane. The protein is Ion-translocating oxidoreductase complex subunit D of Vibrio cholerae serotype O1 (strain ATCC 39315 / El Tor Inaba N16961).